The sequence spans 365 residues: uncharacterized protein (365 aa).

Residues 1–133 lie on the Cytoplasmic side of the membrane; the sequence is MVLAKQWVLK…RKLDKNKVGK (133 aa). Residues 134-154 form a helical membrane-spanning segment; sequence LWWYLSVLGGTSLTAYFIFFT. The Extracellular segment spans residues 155–169; it reads YAQLQEREEDYGKVY. Residues 170 to 190 form a helical membrane-spanning segment; it reads LISGAAGAVGTVCIQLALNVF. The Cytoplasmic segment spans residues 191 to 365; sequence KASKVIAIAG…KLITKVNNEE (175 aa).

Its subcellular location is the membrane. This is an uncharacterized protein from Saccharomyces cerevisiae (strain ATCC 204508 / S288c) (Baker's yeast).